A 399-amino-acid chain; its full sequence is MKMYDLPDKRGHFGPYGGTFVAETLISALDELCKQYEYYRGDAEFQTEFFRELKHYVGRPSPIYHARRWSDHLGGAQILLKREDLNHTGAHKINNTVGQALLARRMGKSRIIAETGAGQHGVASATVAARYGMECVVYMGSEDVKRQATNVYRMKLLGATVIPVDSGSRTLKDALNEAMRDWVTNVGNTYYIIGTVAGPHPYPMMVRDFQAVIGNEARQQMQEEYGRQPDALIACVGGGSNAIGLFYPYIGEENVRMIGVEAAGKGIDTQKHAATLVTGRPGVLHGNRTYLIQDENGQIIETHSISAGLDYPGVGPEHAWLKDCGRAEYVAITDGEALAAFHALCRFEGIMPALESSHALAYAAKLAPTLRKDQLLLVNLSGRGDKDMATVAQQSGISL.

The residue at position 92 (Lys92) is an N6-(pyridoxal phosphate)lysine.

This sequence belongs to the TrpB family. As to quaternary structure, tetramer of two alpha and two beta chains. It depends on pyridoxal 5'-phosphate as a cofactor.

The catalysed reaction is (1S,2R)-1-C-(indol-3-yl)glycerol 3-phosphate + L-serine = D-glyceraldehyde 3-phosphate + L-tryptophan + H2O. It participates in amino-acid biosynthesis; L-tryptophan biosynthesis; L-tryptophan from chorismate: step 5/5. Functionally, the beta subunit is responsible for the synthesis of L-tryptophan from indole and L-serine. This is Tryptophan synthase beta chain from Nitrosomonas eutropha (strain DSM 101675 / C91 / Nm57).